Here is a 256-residue protein sequence, read N- to C-terminus: 5-oxoprolinase subunit A 2 (256 aa).

Belongs to the LamB/PxpA family. As to quaternary structure, forms a complex composed of PxpA, PxpB and PxpC.

The enzyme catalyses 5-oxo-L-proline + ATP + 2 H2O = L-glutamate + ADP + phosphate + H(+). In terms of biological role, catalyzes the cleavage of 5-oxoproline to form L-glutamate coupled to the hydrolysis of ATP to ADP and inorganic phosphate. The chain is 5-oxoprolinase subunit A 2 from Bradyrhizobium diazoefficiens (strain JCM 10833 / BCRC 13528 / IAM 13628 / NBRC 14792 / USDA 110).